Here is a 459-residue protein sequence, read N- to C-terminus: Ribulose bisphosphate carboxylase (459 aa).

Residue Asn-111 participates in substrate binding. The active-site Proton acceptor is the Lys-166. Residue Lys-168 participates in substrate binding. Positions 191, 193, and 194 each coordinate Mg(2+). Lys-191 bears the N6-carboxylysine mark. His-287 acts as the Proton acceptor in catalysis. Substrate contacts are provided by Arg-288, His-321, and Ser-368.

The protein belongs to the RuBisCO large chain family. Type II subfamily. In terms of assembly, homodimer. Mg(2+) is required as a cofactor.

The catalysed reaction is 2 (2R)-3-phosphoglycerate + 2 H(+) = D-ribulose 1,5-bisphosphate + CO2 + H2O. It catalyses the reaction D-ribulose 1,5-bisphosphate + O2 = 2-phosphoglycolate + (2R)-3-phosphoglycerate + 2 H(+). RuBisCO catalyzes two reactions: the carboxylation of D-ribulose 1,5-bisphosphate, the primary event in carbon dioxide fixation, as well as the oxidative fragmentation of the pentose substrate. Both reactions occur simultaneously and in competition at the same active site. This Cereibacter sphaeroides (strain ATCC 17029 / ATH 2.4.9) (Rhodobacter sphaeroides) protein is Ribulose bisphosphate carboxylase.